A 959-amino-acid polypeptide reads, in one-letter code: Bifunctional premutilin synthase (959 aa).

Residues M1–D542 form a class II diterpene cyclase region. The short motif at D309–M312 is the DXDD motif element. D311 (for class II diterpene cyclase activity) is an active-site residue. The tract at residues P543–H959 is class I diterpene synthase. The active-site For class I diterpene synthase activity is the D649. Mg(2+) contacts are provided by D649, D653, and N824. The DDXXD motif motif lies at D649 to D653. The tract at residues K931–H959 is disordered. A compositionally biased stretch (low complexity) spans N934–H959.

Belongs to the terpene synthase family. The cofactor is Mg(2+).

It participates in secondary metabolite biosynthesis; terpenoid biosynthesis. In terms of biological role, bifunctional premutilin synthase; part of the gene cluster that mediates the biosynthesis of pleuromutilin, a tricyclic diterpene showing antibacterial properties. The geranylgeranyl diphosphate (GGPP) synthase ple4 catalyzes the first step in pleuromutilin biosynthesis. GGPP is then substrate of the premutilin synthase (PS) ple3 to yield premutilin. Premutilin synthase is a bifunctional enzyme composed of the fusion of a class II diterpene cyclase (DTC) and a class I diterpene synthase (DTS), with the corresponding domains and active sites containing characteristic aspartate-rich motifs. GGPP is first converted to mutildienyl-diphosphate (MPP) at the class II DTC site. MPP is subsequently further cyclized at the class I DTS site, followed by a 1,5-hydride shift and addition of water prior to terminating deprotonation, to yield premutilin. The cytochrome P450 monooxygenases ple5 and ple6 hydroxylate premutilin at C-11 and C-3, respectively, producing 11-hydroxypremutilin and 3-hydroxypremutilin. The combination of the actions of both ple5 and ple6 leads to the production of 3,11-dihydroxypremutilin. The short chain dehydrogenase ple7 further converts 3,11-dihydroxypremutilin into mutilin. The acetyltransferase ple2 then acetylates mutilin to produce 14-O-acetylmutilin. Finally, the cytochrome P450 monooxygenase ple1 catalyzes hydroxylation on the alpha position of the acetyl side chain of 14-O-acetylmutilin to yield pleuromutilin. The protein is Bifunctional premutilin synthase of Rhodocybe pseudopiperita (Clitopilus pseudopiperitus).